A 77-amino-acid chain; its full sequence is NADH-ubiquinone oxidoreductase chain 4L (77 aa).

2 helical membrane passes run 18–38 (LMFILISLEFIVMSLFILFSG) and 44–64 (MFFYFMCFSVVSSVLGMVVMV).

It belongs to the complex I subunit 4L family.

The protein localises to the mitochondrion membrane. The enzyme catalyses a ubiquinone + NADH + 5 H(+)(in) = a ubiquinol + NAD(+) + 4 H(+)(out). Its function is as follows. Core subunit of the mitochondrial membrane respiratory chain NADH dehydrogenase (Complex I) that is believed to belong to the minimal assembly required for catalysis. Complex I functions in the transfer of electrons from NADH to the respiratory chain. The immediate electron acceptor for the enzyme is believed to be ubiquinone. The sequence is that of NADH-ubiquinone oxidoreductase chain 4L (ND4L) from Ascaris suum (Pig roundworm).